Reading from the N-terminus, the 221-residue chain is UPF0328 protein ECU11_2110 (221 aa).

The protein belongs to the UPF0328 family.

The sequence is that of UPF0328 protein ECU11_2110 from Encephalitozoon cuniculi (strain GB-M1) (Microsporidian parasite).